The primary structure comprises 196 residues: Interleukin-23 subunit alpha (196 aa).

The signal sequence occupies residues 1–21 (MLDCRAIILLWLLPWATQGLA).

Belongs to the IL-6 superfamily. As to quaternary structure, heterodimer with IL12B; disulfide-linked. The heterodimer is known as interleukin IL-23. Interacts with IL23R; this interaction enables recruitment of IL12RB1.

The protein resides in the secreted. Functionally, associates with IL12B to form the pro-inflammatory cytokine IL-23 that plays different roles in innate and adaptive immunity. Released by antigen-presenting cells such as dendritic cells or macrophages, binds to a heterodimeric receptor complex composed of IL12RB1 and IL23R to activate JAK2 and TYK2 which then phosphorylate the receptor to form a docking site leading to the phosphorylation of STAT3 and STAT4. This process leads to activation of several pathways including p38 MAPK or NF-kappa-B and promotes the production of pro-inflammatory cytokines such as interleukin-17A/IL17A. In turn, participates in the early and effective intracellular bacterial clearance. Promotes the expansion and survival of T-helper 17 cells, a CD4-positive helper T-cell subset that produces IL-17, as well as other IL-17-producing cells. The sequence is that of Interleukin-23 subunit alpha (Il23a) from Rattus norvegicus (Rat).